A 574-amino-acid chain; its full sequence is FAD-linked oxidoreductase sor8 (574 aa).

The first 27 residues, M1 to A27, serve as a signal peptide directing secretion. N-linked (GlcNAc...) asparagine glycosylation is found at N58, N112, N136, N266, N312, N363, and N384. The FAD-binding PCMH-type domain occupies V126–N305.

It belongs to the oxygen-dependent FAD-linked oxidoreductase family. FAD serves as cofactor.

It functions in the pathway secondary metabolite biosynthesis. Its function is as follows. FAD-linked oxidoreductase; part of the SOR gene cluster that mediates the biosynthesis of sorbicillinoids, a diverse group of yellow secondary metabolites that restrict growth of competing pathogenic fungi but not of bacteria. Sorbicillinoids biosynthesis requires the action of two PKSs. The SOR cluster is required for the production of trichodimerol and dihydrotrichotetronin, with sor2 being sufficient for production of trichodimerol, but not dihydrotrichotetronin in the light. Sor1 iteratively combines three acetyl units and the growing chain is modified by the ketoacyl reductase subunit, and optional by the enoyl reductase subunit in the second cycle. The polyketide is then handed over to the PKS sor2, which adds three more acetyl units, and two methyl groups. Sor2 releases an aldehyde, which undergoes spontaneous cyclization resulting in the formation of sorbicillin or 2',3'-dihydrosorbicillin. The monooxygenase sor5 oxidizes sorbicillin and 2',3'-dihydrosorbicillin to 2',3'-dihydrosorbicillinol and sorbicillinol, respectively. The oxidoreductase sor8 further converts sorbicillinol into oxosorbicillinol. Sorbicillinol is the building block for the other sorbicillinoids such as disorbicillinol, bisvertinolon, dihydrobisvertinolone, and dihydrotrichotetronine. This Hypocrea jecorina (strain QM6a) (Trichoderma reesei) protein is FAD-linked oxidoreductase sor8.